The primary structure comprises 343 residues: MEMEERKLKILQAIINDYINNGEPVGSRTIAKKYNLGISSATIRNEMADLEEMGYIEQLHTSSGRKPSDKGYRLYVDRLMEIPSMSVEEEMLIKAKIIDSALYEIDKLVKQAMSLVSEMTKLTCVVKSLSARKSYIKSISLINIEPNMILCVFITDSGMIKNSIIRVKSNIENSSLERIANILNSKLKGLTIEQINLEVINNIKKDLREYGHIFDCIMPNLYDILREADSTEVYKEGTMNIFNYPEFKDIEKAKEFLSVIDDRRILDTLFNASGGVTVNIGNENSIKEARDFSVVSSVYKYNGRPLGTIGIIGPTRIPYSKVIKVIMEVVDQINNNLDKMNNS.

It belongs to the HrcA family.

In terms of biological role, negative regulator of class I heat shock genes (grpE-dnaK-dnaJ and groELS operons). Prevents heat-shock induction of these operons. The polypeptide is Heat-inducible transcription repressor HrcA (Clostridium acetobutylicum (strain ATCC 824 / DSM 792 / JCM 1419 / IAM 19013 / LMG 5710 / NBRC 13948 / NRRL B-527 / VKM B-1787 / 2291 / W)).